The chain runs to 372 residues: Pyruvylated Gal-beta-1,3-epitope synthesis protein 5 (372 aa).

Residues 1–12 (MGLPLRIFAGNG) are Cytoplasmic-facing. Residues 13–35 (IGGWCLRLFLFGSLILLLRPLIF) traverse the membrane as a helical; Signal-anchor for type II membrane protein segment. The Lumenal segment spans residues 36 to 372 (YSNTTMKKLK…LRIIEQWKQL (337 aa)). Asparagine 38 and asparagine 128 each carry an N-linked (GlcNAc...) asparagine glycan.

The protein localises to the golgi apparatus membrane. Functionally, involved in cell wall biogenesis. Has a role in the addition of Gal-beta1,3 moeities to galactomannans and their subsequent pyruvylation. Has a role in meiosis. This chain is Pyruvylated Gal-beta-1,3-epitope synthesis protein 5 (pvg5), found in Schizosaccharomyces pombe (strain 972 / ATCC 24843) (Fission yeast).